A 127-amino-acid chain; its full sequence is Glycine cleavage system H protein (127 aa).

In terms of domain architecture, Lipoyl-binding spans 22–104 (KARIGITHFA…YEKAWMIVVE (83 aa)). Lys-63 is subject to N6-lipoyllysine.

It belongs to the GcvH family. In terms of assembly, the glycine cleavage system is composed of four proteins: P, T, L and H. Requires (R)-lipoate as cofactor.

Functionally, the glycine cleavage system catalyzes the degradation of glycine. The H protein shuttles the methylamine group of glycine from the P protein to the T protein. Its function is as follows. Is also involved in protein lipoylation via its role as an octanoyl/lipoyl carrier protein intermediate. The polypeptide is Glycine cleavage system H protein (Bacillus subtilis (strain 168)).